We begin with the raw amino-acid sequence, 488 residues long: Glutamyl-tRNA(Gln) amidotransferase subunit A (488 aa).

Active-site charge relay system residues include K76 and S151. The active-site Acyl-ester intermediate is the S175.

This sequence belongs to the amidase family. GatA subfamily. In terms of assembly, heterotrimer of A, B and C subunits.

The enzyme catalyses L-glutamyl-tRNA(Gln) + L-glutamine + ATP + H2O = L-glutaminyl-tRNA(Gln) + L-glutamate + ADP + phosphate + H(+). Allows the formation of correctly charged Gln-tRNA(Gln) through the transamidation of misacylated Glu-tRNA(Gln) in organisms which lack glutaminyl-tRNA synthetase. The reaction takes place in the presence of glutamine and ATP through an activated gamma-phospho-Glu-tRNA(Gln). The sequence is that of Glutamyl-tRNA(Gln) amidotransferase subunit A from Symbiobacterium thermophilum (strain DSM 24528 / JCM 14929 / IAM 14863 / T).